A 276-amino-acid chain; its full sequence is NAD-capped RNA hydrolase NudC (276 aa).

Arg82 is a binding site for substrate. The Zn(2+) site is built by Cys112 and Cys115. Substrate is bound at residue Glu125. Zn(2+)-binding residues include Cys130 and Cys133. A substrate-binding site is contributed by Tyr138. A Nudix hydrolase domain is found at 139–262 (PRISPSMIVL…SIARYLIDLY (124 aa)). The a divalent metal cation site is built by Ala172, Glu188, and Glu192. The short motif at 173 to 194 (GFAEPGESAEDCLVREVREEVA) is the Nudix box element. 206 to 213 (QCWPFPHS) is a substrate binding site. Glu233 is an a divalent metal cation binding site. Ala255 provides a ligand contact to substrate.

This sequence belongs to the Nudix hydrolase family. NudC subfamily. As to quaternary structure, homodimer. The cofactor is Mg(2+). Mn(2+) is required as a cofactor. Zn(2+) serves as cofactor.

It carries out the reaction a 5'-end NAD(+)-phospho-ribonucleoside in mRNA + H2O = a 5'-end phospho-adenosine-phospho-ribonucleoside in mRNA + beta-nicotinamide D-ribonucleotide + 2 H(+). It catalyses the reaction NAD(+) + H2O = beta-nicotinamide D-ribonucleotide + AMP + 2 H(+). The catalysed reaction is NADH + H2O = reduced beta-nicotinamide D-ribonucleotide + AMP + 2 H(+). MRNA decapping enzyme that specifically removes the nicotinamide adenine dinucleotide (NAD) cap from a subset of mRNAs by hydrolyzing the diphosphate linkage to produce nicotinamide mononucleotide (NMN) and 5' monophosphate mRNA. The NAD-cap is present at the 5'-end of some mRNAs and stabilizes RNA against 5'-processing. Has preference for mRNAs with a 5'-end purine. Catalyzes the hydrolysis of a broad range of dinucleotide pyrophosphates. This Pseudomonas putida (strain GB-1) protein is NAD-capped RNA hydrolase NudC.